The following is an 87-amino-acid chain: Small ribosomal subunit protein bS16 (87 aa).

It belongs to the bacterial ribosomal protein bS16 family.

This chain is Small ribosomal subunit protein bS16, found in Ehrlichia ruminantium (strain Welgevonden).